A 555-amino-acid polypeptide reads, in one-letter code: Carboxypeptidase Y homolog A (555 aa).

Residues 1 to 17 form the signal peptide; that stretch reads MRGLATTLLIGAAAAAT. The propeptide occupies 18-136; that stretch reads YPAQQVLKAP…RLETFDLRVK (119 aa). 5 disulfide bridges follow: cysteine 191–cysteine 430, cysteine 325–cysteine 339, cysteine 349–cysteine 372, cysteine 356–cysteine 365, and cysteine 394–cysteine 400. N-linked (GlcNAc...) asparagine glycosylation is present at asparagine 222. Serine 278 is an active-site residue. The active site involves aspartate 469. The N-linked (GlcNAc...) asparagine glycan is linked to asparagine 520. Histidine 531 is a catalytic residue.

The protein belongs to the peptidase S10 family.

It is found in the vacuole. It carries out the reaction Release of a C-terminal amino acid with broad specificity.. Vacuolar carboxypeptidase involved in degradation of small peptides. Digests preferentially peptides containing an aliphatic or hydrophobic residue in P1' position, as well as methionine, leucine or phenylalanine in P1 position of ester substrate. This Talaromyces marneffei (strain ATCC 18224 / CBS 334.59 / QM 7333) (Penicillium marneffei) protein is Carboxypeptidase Y homolog A (cpyA).